Here is a 160-residue protein sequence, read N- to C-terminus: MKKLAIMAAASMVFAVSSAHAGFTPSGTTGTTKLTVTEECQVRVGDLTVAKTRGQLTDAAPIGPVTVQALGCDARQVALKADTDNFEQGKFFLISDNNRDKLYVNIRPTDNSAWTTDNGVFYKNDVGSWGGIIGIYVDGQQTNTPPGNYTLTLTGGYWAK.

A signal peptide spans Met-1–Ala-21. The interval Gly-22–Arg-75 is receptor-binding.

This sequence belongs to the Dr-adhesin family.

The protein localises to the fimbrium. Hemagglutinins of uropathogenic E.coli mediate adherence to the upper urinary tract. These adhesins bind to the Dr blood group antigen and also agglutinate human erythrocytes in the presence of D-mannose (mannose-resistant hemagglutination (MRHA)). This chain is Dr hemagglutinin structural subunit (draA), found in Escherichia coli.